The sequence spans 203 residues: dITP/XTP pyrophosphatase (203 aa).

Position 9–14 (9–14 (SSNAGK)) interacts with substrate. The Mg(2+) site is built by Glu42 and Asp72. Asp72 acts as the Proton acceptor in catalysis. Residues Ser73, 161-164 (FGYD), Lys184, and 189-190 (HR) each bind substrate.

This sequence belongs to the HAM1 NTPase family. Homodimer. It depends on Mg(2+) as a cofactor.

The catalysed reaction is XTP + H2O = XMP + diphosphate + H(+). The enzyme catalyses dITP + H2O = dIMP + diphosphate + H(+). It catalyses the reaction ITP + H2O = IMP + diphosphate + H(+). Functionally, pyrophosphatase that catalyzes the hydrolysis of nucleoside triphosphates to their monophosphate derivatives, with a high preference for the non-canonical purine nucleotides XTP (xanthosine triphosphate), dITP (deoxyinosine triphosphate) and ITP. Seems to function as a house-cleaning enzyme that removes non-canonical purine nucleotides from the nucleotide pool, thus preventing their incorporation into DNA/RNA and avoiding chromosomal lesions. The sequence is that of dITP/XTP pyrophosphatase from Acidobacterium capsulatum (strain ATCC 51196 / DSM 11244 / BCRC 80197 / JCM 7670 / NBRC 15755 / NCIMB 13165 / 161).